Reading from the N-terminus, the 301-residue chain is TLR adapter interacting with SLC15A4 on the lysosome (301 aa).

The short motif at 290-294 (SLHIS) is the pLxIS motif element. A Phosphoserine modification is found at Ser-294.

Interacts (via pLxIS motif) with IRF5; leading to IRF5 activation. Interacts with SLC15A4; leading to its recruitment to endolysosome. In terms of processing, the phosphorylated pLxIS motif constitutes an IRF5-binding motif, leading to recruitment of the transcription factor IRF5 to induce type-I interferons and other cytokines. Highly expressed in immune cell types such as B-cells, neutrophils, dendritic cells and monocytes, the expression levels are two-three-fold higher in female cells compared to male cells (at protein level). Expressed at low levels in T-cells and NK cells.

It localises to the lysosome membrane. It is found in the endosome membrane. The protein localises to the nucleus. Its subcellular location is the cytoplasm. Functionally, innate immune adapter that mediates the recruitment and activation of IRF5 downstream of endolysosomal toll-like receptors TLR7, TLR8 and TLR9. Following recruitment to endolysosome by SLC15A4 downstream of TLR7, TLR8 and TLR9, specifically recruits IRF5 transcription factor via its pLxIS motif, leading to IRF5 activation and subsequent expression of type I interferons. Plays a role in the regulation of endolysosomal pH in immune cells such as B-cells, dendritic cells and monocytes. This chain is TLR adapter interacting with SLC15A4 on the lysosome, found in Homo sapiens (Human).